Consider the following 106-residue polypeptide: Putative double-stranded DNA mimic protein PM0536 (106 aa).

Belongs to the putative dsDNA mimic protein family.

Functionally, may act as a double-stranded DNA (dsDNA) mimic. Probably regulates the activity of a dsDNA-binding protein. This is Putative double-stranded DNA mimic protein PM0536 from Pasteurella multocida (strain Pm70).